We begin with the raw amino-acid sequence, 703 residues long: Protein STRUBBELIG-RECEPTOR FAMILY 8 (703 aa).

Residues 1–27 (MAIGDRAMFTVLLLFIASISGFSVVRC) form the signal peptide. The Extracellular segment spans residues 28 to 291 (VTDPSDVQAL…GKGLSGGVVT (264 aa)). LRR repeat units follow at residues 96–120 (LKSL…LPPN), 122–142 (TSLN…ISAM), 143–165 (GSLS…IFAD), 166–190 (HKSL…LSTV), 192–212 (TLSV…VLSG), 213–233 (LPLK…PKEL), and 234–256 (SSIQ…PQPE). Residues Asn-120, Asn-130, Asn-149, and Asn-178 are each glycosylated (N-linked (GlcNAc...) asparagine). N-linked (GlcNAc...) asparagine glycosylation is present at Asn-226. The tract at residues 247 to 284 (DNVPASPQPERPGKKETPSGSKKPKIGSEEKSSDSGKG) is disordered. The helical transmembrane segment at 292-312 (GIVFGSLFVAGIIALVLYLCL) threads the bilayer. The Cytoplasmic segment spans residues 313 to 703 (HKKKRKVRGS…PEHEHVDISF (391 aa)). A Protein kinase domain is found at 395–672 (FSQENIIGEG…SEVVQQLVRL (278 aa)). Residues 401 to 409 (IGEGSLGRV) and Lys-423 contribute to the ATP site.

Belongs to the protein kinase superfamily. Ser/Thr protein kinase family. Expressed in seedlings, roots, stems, leaves, flowers and siliques.

The protein localises to the membrane. This Arabidopsis thaliana (Mouse-ear cress) protein is Protein STRUBBELIG-RECEPTOR FAMILY 8 (SRF8).